The primary structure comprises 140 residues: ATP synthase epsilon chain (140 aa).

The protein belongs to the ATPase epsilon chain family. In terms of assembly, F-type ATPases have 2 components, CF(1) - the catalytic core - and CF(0) - the membrane proton channel. CF(1) has five subunits: alpha(3), beta(3), gamma(1), delta(1), epsilon(1). CF(0) has three main subunits: a, b and c.

Its subcellular location is the cell inner membrane. Functionally, produces ATP from ADP in the presence of a proton gradient across the membrane. This is ATP synthase epsilon chain from Colwellia maris.